The chain runs to 88 residues: Acyl-CoA-binding protein homolog (88 aa).

The 86-residue stretch at 3-88 folds into the ACB domain; it reads PQADFDKAAG…AHELIEKYGL (86 aa). An acyl-CoA-binding positions include Lys15, 30-34, Lys52, Lys56, and Tyr75; that span reads YGLYK.

This sequence belongs to the ACBP family. As to expression, brain. Is selectively expressed in glial cells.

Its subcellular location is the endoplasmic reticulum. The protein localises to the golgi apparatus. May play important functions in the control of brain and pituitary activities. May regulate GABA neurotransmission through a paracrine and/or autocrine mechanism. May not bind acyl-CoA esters. The sequence is that of Acyl-CoA-binding protein homolog from Pelophylax ridibundus (Marsh frog).